Consider the following 816-residue polypeptide: Probable E3 ubiquitin-protein ligase hulA (816 aa).

The C2 domain maps to 1–112 (MGSNLPAQPN…QMGGDEMLTR (112 aa)). 2 disordered regions span residues 134–238 (NLST…GWER) and 254–354 (RTTT…YFVD). Residues 160–178 (VPQVAPSSSHPAASGAAPV) are compositionally biased toward low complexity. The segment covering 181-192 (SASNPSLNPQRV) has biased composition (polar residues). A compositionally biased stretch (low complexity) spans 193–213 (PSTTRPSSTAAPASAAGAAAS). 2 stretches are compositionally biased toward polar residues: residues 214 to 227 (NTHG…SFED) and 254 to 267 (RTTT…NYNE). The region spanning 230-263 (GRLPAGWERREDNLGRTYYVDHNTRTTTWTRPSS) is the WW 1 domain. Residues 268–295 (HAQRSQREANMQLERRAHQSRMLPEDRT) are compositionally biased toward basic and acidic residues. A compositionally biased stretch (polar residues) spans 296–310 (GANSPNLPESSQQAH). The segment covering 325–334 (ATGATTAGTG) has biased composition (low complexity). WW domains are found at residues 334 to 367 (GELP…DPRR) and 394 to 427 (GPLP…DPRL). Residues 483–816 (SASDLKKRLM…VEETLGFGQE (334 aa)) form the HECT domain. Cys784 serves as the catalytic Glycyl thioester intermediate.

It belongs to the RSP5/NEDD4 family. In terms of assembly, interacts with creD.

It is found in the cytoplasm. The catalysed reaction is S-ubiquitinyl-[E2 ubiquitin-conjugating enzyme]-L-cysteine + [acceptor protein]-L-lysine = [E2 ubiquitin-conjugating enzyme]-L-cysteine + N(6)-ubiquitinyl-[acceptor protein]-L-lysine.. The protein operates within protein modification; protein ubiquitination. Functionally, E3 ubiquitin-protein ligase which accepts ubiquitin from an E2 ubiquitin-conjugating enzyme in the form of a thioester and then directly transfers the ubiquitin to targeted substrates. Probably involved in the regulatory network controlling carbon source utilization. This is Probable E3 ubiquitin-protein ligase hulA (hulA) from Neosartorya fischeri (strain ATCC 1020 / DSM 3700 / CBS 544.65 / FGSC A1164 / JCM 1740 / NRRL 181 / WB 181) (Aspergillus fischerianus).